The following is a 227-amino-acid chain: Cytochrome c oxidase subunit 2 (227 aa).

Residues 1-14 lie on the Mitochondrial intermembrane side of the membrane; the sequence is MAYPVQLGFQDAAS. Residues 15-45 traverse the membrane as a helical segment; it reads PIMEELLYFHDHTLMIMFLISSLVLYIISLM. The Mitochondrial matrix portion of the chain corresponds to 46-59; it reads LTTELMHTNTMDAQ. Residues 60-87 traverse the membrane as a helical segment; sequence EVETVWTILPAAILILIALPSLRILYMM. Residues 88–227 are Mitochondrial intermembrane-facing; that stretch reads DEITTPSLTL…HFEEWLLSML (140 aa). Positions 161, 196, 198, 200, 204, and 207 each coordinate Cu cation. Glu-198 serves as a coordination point for Mg(2+).

The protein belongs to the cytochrome c oxidase subunit 2 family. Component of the cytochrome c oxidase (complex IV, CIV), a multisubunit enzyme composed of 14 subunits. The complex is composed of a catalytic core of 3 subunits MT-CO1, MT-CO2 and MT-CO3, encoded in the mitochondrial DNA, and 11 supernumerary subunits COX4I, COX5A, COX5B, COX6A, COX6B, COX6C, COX7A, COX7B, COX7C, COX8 and NDUFA4, which are encoded in the nuclear genome. The complex exists as a monomer or a dimer and forms supercomplexes (SCs) in the inner mitochondrial membrane with NADH-ubiquinone oxidoreductase (complex I, CI) and ubiquinol-cytochrome c oxidoreductase (cytochrome b-c1 complex, complex III, CIII), resulting in different assemblies (supercomplex SCI(1)III(2)IV(1) and megacomplex MCI(2)III(2)IV(2)). Found in a complex with TMEM177, COA6, COX18, COX20, SCO1 and SCO2. Interacts with TMEM177 in a COX20-dependent manner. Interacts with COX20. Interacts with COX16. Cu cation serves as cofactor.

Its subcellular location is the mitochondrion inner membrane. The enzyme catalyses 4 Fe(II)-[cytochrome c] + O2 + 8 H(+)(in) = 4 Fe(III)-[cytochrome c] + 2 H2O + 4 H(+)(out). In terms of biological role, component of the cytochrome c oxidase, the last enzyme in the mitochondrial electron transport chain which drives oxidative phosphorylation. The respiratory chain contains 3 multisubunit complexes succinate dehydrogenase (complex II, CII), ubiquinol-cytochrome c oxidoreductase (cytochrome b-c1 complex, complex III, CIII) and cytochrome c oxidase (complex IV, CIV), that cooperate to transfer electrons derived from NADH and succinate to molecular oxygen, creating an electrochemical gradient over the inner membrane that drives transmembrane transport and the ATP synthase. Cytochrome c oxidase is the component of the respiratory chain that catalyzes the reduction of oxygen to water. Electrons originating from reduced cytochrome c in the intermembrane space (IMS) are transferred via the dinuclear copper A center (CU(A)) of subunit 2 and heme A of subunit 1 to the active site in subunit 1, a binuclear center (BNC) formed by heme A3 and copper B (CU(B)). The BNC reduces molecular oxygen to 2 water molecules using 4 electrons from cytochrome c in the IMS and 4 protons from the mitochondrial matrix. In Lemur catta (Ring-tailed lemur), this protein is Cytochrome c oxidase subunit 2 (MT-CO2).